Here is a 137-residue protein sequence, read N- to C-terminus: Holo-[acyl-carrier-protein] synthase (137 aa).

2 residues coordinate Mg(2+): Asp8 and Glu57.

This sequence belongs to the P-Pant transferase superfamily. AcpS family. Mg(2+) is required as a cofactor.

It is found in the cytoplasm. The enzyme catalyses apo-[ACP] + CoA = holo-[ACP] + adenosine 3',5'-bisphosphate + H(+). Its function is as follows. Transfers the 4'-phosphopantetheine moiety from coenzyme A to a Ser of acyl-carrier-protein. This is Holo-[acyl-carrier-protein] synthase from Cereibacter sphaeroides (strain ATCC 17025 / ATH 2.4.3) (Rhodobacter sphaeroides).